Reading from the N-terminus, the 915-residue chain is Mitogen-activated protein kinase kinae kinase MST11 (915 aa).

3 disordered regions span residues 1-65 (MAML…PKHW), 134-171 (KKRNRDSFAGHESMYTPVSESPSKPFHSSSRVMPNPSV), and 183-249 (GMAY…TRTD). Low complexity predominate over residues 26 to 45 (AQASYPPSRRAPAVPPASQS). One can recognise an SAM domain in the interval 65-128 (WDEDKVCEYL…FLSIKKLRTK (64 aa)). Composition is skewed to low complexity over residues 152–163 (SESPSKPFHSSS) and 188–203 (PSRPTTSSRPTSPLPS). The Ras-associating domain maps to 263 to 353 (NQDVIRVIST…NRLILRRVPA (91 aa)). The 271-residue stretch at 641-911 (WMKGALIGQG…ADDLMLSPFL (271 aa)) folds into the Protein kinase domain. ATP is bound by residues 647–655 (IGQGSFGCV) and K670.

This sequence belongs to the protein kinase superfamily. STE Ser/Thr protein kinase family. MAP kinase kinase kinase subfamily. Interacts with the adapter protein MST50.

It catalyses the reaction L-seryl-[protein] + ATP = O-phospho-L-seryl-[protein] + ADP + H(+). The enzyme catalyses L-threonyl-[protein] + ATP = O-phospho-L-threonyl-[protein] + ADP + H(+). Functionally, mitogen-activated protein kinase kinase kinase; part of the MST11-MST7-PMK1 MAP kinase (MAPK) cascade that is essential for appressorium formation, penetration and invasive growth. The MST11-MST7-PMK1 MAP kinase cascade transduces signals from the cell surface sensors MDB2 and SHO1 that recognize various surface signals such as surface hydrophobicity, cutin monomers, and rice leaf waxes. MST11 acts as the upstream MAPKKK that directly phosphorylates MAPKK MST7. MST11 but not MST7 may also be involved in the OSM1 MAPK pathway in response to osmotic stresses. This chain is Mitogen-activated protein kinase kinae kinase MST11, found in Pyricularia oryzae (strain 70-15 / ATCC MYA-4617 / FGSC 8958) (Rice blast fungus).